We begin with the raw amino-acid sequence, 161 residues long: PRS fimbrial major pilin protein (161 aa).

Belongs to the fimbrial protein family.

The protein resides in the secreted. Its subcellular location is the fimbrium. Functionally, fimbriae (also called pili), polar filaments radiating from the surface of the bacterium to a length of 0.5-1.5 micrometers and numbering 100-300 per cell, enable bacteria to colonize the epithelium of specific host organs. The chain is PRS fimbrial major pilin protein (prsA) from Escherichia coli.